Consider the following 236-residue polypeptide: Glycoprotein U23 (236 aa).

An N-terminal signal peptide occupies residues 1–17; sequence MLFLSFLLVCLCEEVRM. N-linked (GlcNAc...) asparagine; by host glycosylation is found at Asn67, Asn80, and Asn103. A helical transmembrane segment spans residues 184–204; sequence LVIWIGGISFIGAFVILIVIL.

It is found in the membrane. In Human herpesvirus 6A (strain Uganda-1102) (HHV-6 variant A), this protein is Glycoprotein U23 (U23).